A 215-amino-acid polypeptide reads, in one-letter code: MTRTPTTRMGLLEVRGRADVASKGARLLRAKREVLAGELWKLTREVLAGRARLDEVLRGAVKALGLARALEGEEALASVALTAAREVPLQVSVRRVWGVPTPSVAAPALIRAADERGSSPTSWGLAGTEAARRHEEALEVLLRIASRELHLARLGEEIQATSRRINALEQLVLPALTAESGRIEAALEERDREDVVRLKRFRARRPRREASARRP.

This sequence belongs to the V-ATPase D subunit family.

In terms of biological role, produces ATP from ADP in the presence of a proton gradient across the membrane. In Anaeromyxobacter sp. (strain Fw109-5), this protein is V-type ATP synthase subunit D.